Reading from the N-terminus, the 122-residue chain is Large ribosomal subunit protein uL14 (122 aa).

It belongs to the universal ribosomal protein uL14 family. In terms of assembly, part of the 50S ribosomal subunit. Forms a cluster with proteins L3 and L19. In the 70S ribosome, L14 and L19 interact and together make contacts with the 16S rRNA in bridges B5 and B8.

Its function is as follows. Binds to 23S rRNA. Forms part of two intersubunit bridges in the 70S ribosome. In Phytoplasma mali (strain AT), this protein is Large ribosomal subunit protein uL14.